The chain runs to 249 residues: 1-(5-phosphoribosyl)-5-[(5-phosphoribosylamino)methylideneamino] imidazole-4-carboxamide isomerase (249 aa).

Residue D8 is the Proton acceptor of the active site. Residue D129 is the Proton donor of the active site.

It belongs to the HisA/HisF family.

The protein resides in the cytoplasm. It carries out the reaction 1-(5-phospho-beta-D-ribosyl)-5-[(5-phospho-beta-D-ribosylamino)methylideneamino]imidazole-4-carboxamide = 5-[(5-phospho-1-deoxy-D-ribulos-1-ylimino)methylamino]-1-(5-phospho-beta-D-ribosyl)imidazole-4-carboxamide. The protein operates within amino-acid biosynthesis; L-histidine biosynthesis; L-histidine from 5-phospho-alpha-D-ribose 1-diphosphate: step 4/9. The protein is 1-(5-phosphoribosyl)-5-[(5-phosphoribosylamino)methylideneamino] imidazole-4-carboxamide isomerase of Magnetococcus marinus (strain ATCC BAA-1437 / JCM 17883 / MC-1).